A 71-amino-acid chain; its full sequence is Translation initiation factor IF-1 (71 aa).

Residues 1–71 (MKEKNIEMQG…SKGRIIFRSR (71 aa)) enclose the S1-like domain.

This sequence belongs to the IF-1 family. In terms of assembly, component of the 30S ribosomal translation pre-initiation complex which assembles on the 30S ribosome in the order IF-2 and IF-3, IF-1 and N-formylmethionyl-tRNA(fMet); mRNA recruitment can occur at any time during PIC assembly.

Its subcellular location is the cytoplasm. One of the essential components for the initiation of protein synthesis. Stabilizes the binding of IF-2 and IF-3 on the 30S subunit to which N-formylmethionyl-tRNA(fMet) subsequently binds. Helps modulate mRNA selection, yielding the 30S pre-initiation complex (PIC). Upon addition of the 50S ribosomal subunit IF-1, IF-2 and IF-3 are released leaving the mature 70S translation initiation complex. This Buchnera aphidicola subsp. Cinara cedri (strain Cc) protein is Translation initiation factor IF-1.